We begin with the raw amino-acid sequence, 248 residues long: Tetrachloro-P-hydroquinone reductive dehalogenase (248 aa).

The GST N-terminal domain occupies 2-84 (PEVSLYNYTM…EAAKLGKVGI (83 aa)). Positions 133–248 (YAEKYPELRS…RVMPNWKGGI (116 aa)) constitute a GST C-terminal domain.

This sequence belongs to the GST superfamily. In terms of assembly, homodimer.

It carries out the reaction 2,6-dichlorohydroquinone + glutathione disulfide + chloride + H(+) = 2,3,6-trichlorohydroquinone + 2 glutathione. It catalyses the reaction 2,3,6-trichlorohydroquinone + glutathione disulfide + chloride = 2,3,5,6-tetrachlorohydroquinone + 2 glutathione. Its pathway is xenobiotic degradation; pentachlorophenol degradation. Its function is as follows. Sequential reduction of tetrachloro-p-hydroquinone to monochlorophenol, using glutathione as the reducing agent. The protein is Tetrachloro-P-hydroquinone reductive dehalogenase (pcpC) of Sphingobium chlorophenolicum.